The primary structure comprises 83 residues: Cytochrome b559 subunit alpha (83 aa).

Residues 21–35 (IIHSITIPSLFIAGW) form a helical membrane-spanning segment. Position 23 (His23) interacts with heme.

This sequence belongs to the PsbE/PsbF family. As to quaternary structure, heterodimer of an alpha subunit and a beta subunit. PSII is composed of 1 copy each of membrane proteins PsbA, PsbB, PsbC, PsbD, PsbE, PsbF, PsbH, PsbI, PsbJ, PsbK, PsbL, PsbM, PsbT, PsbX, PsbY, PsbZ, Psb30/Ycf12, at least 3 peripheral proteins of the oxygen-evolving complex and a large number of cofactors. It forms dimeric complexes. Heme b is required as a cofactor.

The protein resides in the plastid. It is found in the chloroplast thylakoid membrane. Functionally, this b-type cytochrome is tightly associated with the reaction center of photosystem II (PSII). PSII is a light-driven water:plastoquinone oxidoreductase that uses light energy to abstract electrons from H(2)O, generating O(2) and a proton gradient subsequently used for ATP formation. It consists of a core antenna complex that captures photons, and an electron transfer chain that converts photonic excitation into a charge separation. In Lotus japonicus (Lotus corniculatus var. japonicus), this protein is Cytochrome b559 subunit alpha.